A 120-amino-acid polypeptide reads, in one-letter code: Holo-[acyl-carrier-protein] synthase (120 aa).

The Mg(2+) site is built by Asp8 and Glu58.

This sequence belongs to the P-Pant transferase superfamily. AcpS family. Mg(2+) serves as cofactor.

It is found in the cytoplasm. The enzyme catalyses apo-[ACP] + CoA = holo-[ACP] + adenosine 3',5'-bisphosphate + H(+). Its function is as follows. Transfers the 4'-phosphopantetheine moiety from coenzyme A to a Ser of acyl-carrier-protein. The chain is Holo-[acyl-carrier-protein] synthase from Streptococcus pneumoniae (strain Hungary19A-6).